The sequence spans 218 residues: MGTLLAFVVGAALVSSAWGGCVEVDSETEAVYGMTFKILCISCKRRSETNAETFTEWTFRQKGTEEFVKILRYENEVLQLEEDERFEGRVVWNGSRGTKDLQDLSIFITNVTYNHSGDYECHVYRLLFFDNYEHNTSVVKKIHLEVVDKANRDMASIVSEIMMYVLIVVLTIWLVAEMVYCYKKIAAATEAAAQENASEYLAITSESKENCTGVQVAE.

The signal sequence occupies residues 1 to 18; it reads MGTLLAFVVGAALVSSAW. The Extracellular segment spans residues 19 to 157; sequence GGCVEVDSET…DKANRDMASI (139 aa). 2 disulfide bridges follow: Cys21-Cys43 and Cys40-Cys121. The Ig-like C2-type domain maps to 22-150; the sequence is VEVDSETEAV…KIHLEVVDKA (129 aa). 4 N-linked (GlcNAc...) asparagine glycosylation sites follow: Asn93, Asn110, Asn114, and Asn135. The chain crosses the membrane as a helical span at residues 158–179; it reads VSEIMMYVLIVVLTIWLVAEMV. Over 180-218 the chain is Cytoplasmic; that stretch reads YCYKKIAAATEAAAQENASEYLAITSESKENCTGVQVAE.

The protein belongs to the sodium channel auxiliary subunit SCN1B (TC 8.A.17) family. A voltage-gated sodium (Nav) channel consists of an ion-conducting pore-forming alpha subunit functional on its own that is regulated by one or more beta subunits. Interacts with SCN1A; regulatory subunit of SCN1A/Nav1.1. Interacts with SCN3A; regulatory subunit of SCN3A/Nav1.3. Interacts with SCN4A; regulatory subunit of SCN4A/Nav1.4. Interacts with SCN5A; regulatory subunit of SCN5A/Nav1.5. Interacts with SCN8A; regulatory subunit of SCN8A/Nav1.6. Interacts with SCN9A; regulatory subunit of SCN9A/Nav1.7. Interacts with SCN10A; regulatory subunit of SCN10A/Nav1.8. Interacts with NFASC. Interacts with TMEM65.

The protein resides in the cell membrane. It is found in the perikaryon. Its subcellular location is the cell projection. It localises to the axon. Regulatory subunit of multiple voltage-gated sodium (Nav) channels directly mediating the depolarization of excitable membranes. Navs, also called VGSCs (voltage-gated sodium channels) or VDSCs (voltage-dependent sodium channels), operate by switching between closed and open conformations depending on the voltage difference across the membrane. In the open conformation they allow Na(+) ions to selectively pass through the pore, along their electrochemical gradient. The influx of Na+ ions provokes membrane depolarization, initiating the propagation of electrical signals throughout cells and tissues. The accessory beta subunits participate in localization and functional modulation of the Nav channels. Modulates the activity of SCN1A/Nav1.1, SCN2A/Nav1.2, SCN3A/Nav1.3, SCN4A/Nav1.4, SCN5A/Nav1.5, SCN8A/Nav1.6, SCN9A/Nav1.7 and SCN10A/Nav1.8. The sequence is that of Sodium channel regulatory subunit beta-1 from Bos taurus (Bovine).